A 303-amino-acid chain; its full sequence is Lipoyl synthase (303 aa).

7 residues coordinate [4Fe-4S] cluster: Cys35, Cys40, Cys46, Cys61, Cys65, Cys68, and Ser273. The region spanning Phe47–Arg262 is the Radical SAM core domain.

This sequence belongs to the radical SAM superfamily. Lipoyl synthase family. [4Fe-4S] cluster is required as a cofactor.

Its subcellular location is the cytoplasm. It catalyses the reaction [[Fe-S] cluster scaffold protein carrying a second [4Fe-4S](2+) cluster] + N(6)-octanoyl-L-lysyl-[protein] + 2 oxidized [2Fe-2S]-[ferredoxin] + 2 S-adenosyl-L-methionine + 4 H(+) = [[Fe-S] cluster scaffold protein] + N(6)-[(R)-dihydrolipoyl]-L-lysyl-[protein] + 4 Fe(3+) + 2 hydrogen sulfide + 2 5'-deoxyadenosine + 2 L-methionine + 2 reduced [2Fe-2S]-[ferredoxin]. It participates in protein modification; protein lipoylation via endogenous pathway; protein N(6)-(lipoyl)lysine from octanoyl-[acyl-carrier-protein]: step 2/2. In terms of biological role, catalyzes the radical-mediated insertion of two sulfur atoms into the C-6 and C-8 positions of the octanoyl moiety bound to the lipoyl domains of lipoate-dependent enzymes, thereby converting the octanoylated domains into lipoylated derivatives. This is Lipoyl synthase from Geobacter sulfurreducens (strain ATCC 51573 / DSM 12127 / PCA).